A 518-amino-acid polypeptide reads, in one-letter code: Xylose import ATP-binding protein XylG (518 aa).

2 ABC transporter domains span residues 6-245 (LQMN…VGRE) and 262-507 (FEAR…LSHP). 38 to 45 (GENGTGKS) is a binding site for ATP.

Belongs to the ABC transporter superfamily. Xylose importer (TC 3.A.1.2.4) family. The complex is composed of two ATP-binding proteins (XylG), two transmembrane proteins (XylH) and a solute-binding protein (XylF).

The protein resides in the cell inner membrane. It carries out the reaction D-xylose(out) + ATP + H2O = D-xylose(in) + ADP + phosphate + H(+). Part of the ABC transporter complex XylFGH involved in xylose import. Responsible for energy coupling to the transport system. This Pseudomonas savastanoi pv. phaseolicola (strain 1448A / Race 6) (Pseudomonas syringae pv. phaseolicola (strain 1448A / Race 6)) protein is Xylose import ATP-binding protein XylG.